The chain runs to 112 residues: Na(+)/H(+) antiporter subunit C (112 aa).

3 helical membrane-spanning segments follow: residues 4 to 21, 28 to 50, and 70 to 92; these read LMSI…YLIL, VVVG…AGLQ, and QALI…VLAY.

Belongs to the CPA3 antiporters (TC 2.A.63) subunit C family. As to quaternary structure, forms a heterooligomeric complex that consists of seven subunits: MrpA, MrpB, MrpC, MrpD, MrpE, MrpF and MrpG.

Its subcellular location is the cell membrane. Functionally, mnh complex is a Na(+)Li(+)/H(+) antiporter involved in Na(+) and/or Li(+) excretion and Na(+) resistance. Na(+)/H(+) antiport consumes a transmembrane electrical potential, and is thus inferred to be electrogenic. Does not transport K(+), Ca(2+) or Mg(2+). This Alkalihalophilus pseudofirmus (strain ATCC BAA-2126 / JCM 17055 / OF4) (Bacillus pseudofirmus) protein is Na(+)/H(+) antiporter subunit C (mrpC).